The chain runs to 157 residues: Small ribosomal subunit protein uS7 (157 aa).

The protein belongs to the universal ribosomal protein uS7 family. In terms of assembly, part of the 30S ribosomal subunit. Contacts proteins S9 and S11.

In terms of biological role, one of the primary rRNA binding proteins, it binds directly to 16S rRNA where it nucleates assembly of the head domain of the 30S subunit. Is located at the subunit interface close to the decoding center, probably blocks exit of the E-site tRNA. The protein is Small ribosomal subunit protein uS7 of Caulobacter vibrioides (strain ATCC 19089 / CIP 103742 / CB 15) (Caulobacter crescentus).